A 705-amino-acid chain; its full sequence is Tetratricopeptide repeat protein 12 (705 aa).

The residue at position 71 (Thr-71) is a Phosphothreonine. 3 TPR repeats span residues 106–139 (ADAL…LKDM), 140–173 (KVLY…DEKC), and 174–207 (TKAY…NPKL).

In terms of tissue distribution, expressed in testis and in epithelial cells of trachea and bronchial tube.

It is found in the cytoplasm. Cytoplasmic protein that plays a role in the proper assembly of dynein arm complexes in motile cilia in both respiratory cells and sperm flagella. The protein is Tetratricopeptide repeat protein 12 (TTC12) of Homo sapiens (Human).